A 497-amino-acid chain; its full sequence is Cytochrome P450 71A20 (497 aa).

Residues 3-23 (MILITLCLTTLLALLLKSILK) traverse the membrane as a helical segment. C440 serves as a coordination point for heme.

Belongs to the cytochrome P450 family. The cofactor is heme.

It localises to the membrane. This is Cytochrome P450 71A20 (CYP71A20) from Arabidopsis thaliana (Mouse-ear cress).